The following is a 448-amino-acid chain: UDP-N-acetylmuramoylalanine--D-glutamate ligase (448 aa).

116–122 (GSNAKST) provides a ligand contact to ATP.

The protein belongs to the MurCDEF family.

The protein localises to the cytoplasm. The enzyme catalyses UDP-N-acetyl-alpha-D-muramoyl-L-alanine + D-glutamate + ATP = UDP-N-acetyl-alpha-D-muramoyl-L-alanyl-D-glutamate + ADP + phosphate + H(+). It functions in the pathway cell wall biogenesis; peptidoglycan biosynthesis. Its function is as follows. Cell wall formation. Catalyzes the addition of glutamate to the nucleotide precursor UDP-N-acetylmuramoyl-L-alanine (UMA). The protein is UDP-N-acetylmuramoylalanine--D-glutamate ligase of Pseudomonas savastanoi pv. phaseolicola (strain 1448A / Race 6) (Pseudomonas syringae pv. phaseolicola (strain 1448A / Race 6)).